A 421-amino-acid chain; its full sequence is BEN domain-containing protein 5 (421 aa).

Residue Lys-133 is modified to N6-acetyllysine. Residues 180 to 243 (RALYEELLRN…LNRRLQDVLL (64 aa)) adopt a coiled-coil conformation. Lys-258 is covalently cross-linked (Glycyl lysine isopeptide (Lys-Gly) (interchain with G-Cter in SUMO2)). One can recognise a BEN domain in the interval 302 to 408 (GSGIWVDEEK…EKIMDINKSC (107 aa)).

In terms of biological role, acts as a transcriptional repressor. This chain is BEN domain-containing protein 5 (BEND5), found in Homo sapiens (Human).